Here is a 99-residue protein sequence, read N- to C-terminus: MSHNHEQEHDLITLVDEQGNETLFEVLLTIDGKEEFGKNYVLLVPAGAEEDADGQIEIQAYSFTENEDGTEGALQPIPEDADAEWIMIEEVFNSFLDED.

This sequence belongs to the UPF0473 family.

The protein is UPF0473 protein SMU_2077c of Streptococcus mutans serotype c (strain ATCC 700610 / UA159).